The sequence spans 576 residues: High-affinity choline transporter 1 (576 aa).

The helical transmembrane segment at 6 to 26 (GIVAIVFFYVLILVVGIWAGR) threads the bilayer. The Cytoplasmic portion of the chain corresponds to 27 to 51 (KSKSSKELESEAGAATEEVMLAGRN). The helical transmembrane segment at 52 to 72 (IGTLVGIFTMTATWVGGAYIN) threads the bilayer. Topologically, residues 73–82 (GTAEALYNGG) are extracellular. The helical transmembrane segment at 83-103 (LLGCQAPVGYAISLVMGGLLF) threads the bilayer. Over 104 to 126 (AKKMREEGYITMLDPFQHKYGQR) the chain is Cytoplasmic. A helical membrane pass occupies residues 127–147 (IGGLMYVPALLGETFWTAAIL). Over 148-165 (SALGATLSVILGIDMNAS) the chain is Extracellular. The helical transmembrane segment at 166 to 186 (VTLSACIAVFYTFTGGYYAVA) threads the bilayer. Residues 187–192 (YTDVVQ) lie on the Cytoplasmic side of the membrane. A helical transmembrane segment spans residues 193–213 (LFCIFVGLWVCVPAAMVHDGA). At 214–233 (KDISRNAGDWIGEIGGFKET) the chain is on the extracellular side. A helical transmembrane segment spans residues 234–254 (SLWIDCMLLLVFGGIPWQVYF). Topologically, residues 255-270 (QRVLSSKTAHGAQTLS) are cytoplasmic. Residues 271 to 291 (FVAGVGCILMAIPPALIGAIA) form a helical membrane-spanning segment. The Extracellular segment spans residues 292-319 (RNTDWRMTDYSPWNNGTKVESIPPDKRN). N-linked (GlcNAc...) asparagine glycosylation is present at asparagine 306. A helical membrane pass occupies residues 320 to 340 (MVVPLVFQYLTPRWVAFIGLG). The Cytoplasmic portion of the chain corresponds to 341-378 (AVSAAVMSSADSSVLSAASMFAHNIWKLTIRPHASEKE). The helical transmembrane segment at 379–399 (VIIVMRIAIICVGIMATIMAL) threads the bilayer. Over 400–408 (TIQSIYGLW) the chain is Extracellular. Residues 409 to 429 (YLCADLVYVILFPQLLCVVYM) traverse the membrane as a helical segment. At 430 to 437 (PRSNTYGS) the chain is on the cytoplasmic side. Residues 438–458 (LAGYAVGLVLRLIGGEPLVSL) form a helical membrane-spanning segment. Residues 459–478 (PAFFHYPMYTDGVQYFPFRT) lie on the Extracellular side of the membrane. A helical membrane pass occupies residues 479-499 (TAMLSSMATIYIVSIQSEKLF). Residues 500 to 576 (KSGRLSPEWD…DQSYYSTNSN (77 aa)) lie on the Cytoplasmic side of the membrane. The tract at residues 541–576 (APNGTPAPVHPNQQPSDENTLLHPYSDQSYYSTNSN) is disordered. The segment covering 566–576 (SDQSYYSTNSN) has biased composition (polar residues).

The protein belongs to the sodium:solute symporter (SSF) (TC 2.A.21) family. As to expression, detected in the nervous system, including the nerve ring and cholinergic motor neurons of the ventral nerve cord.

The protein localises to the membrane. Its function is as follows. Imports choline from the extracellular space to the neuron with high affinity. Choline uptake is the rate-limiting step in acetylcholine synthesis. Sodium ion and chloride ion dependent. The chain is High-affinity choline transporter 1 (cho-1) from Caenorhabditis elegans.